The chain runs to 428 residues: Glutamate-1-semialdehyde 2,1-aminomutase (428 aa).

Lys-265 carries the post-translational modification N6-(pyridoxal phosphate)lysine.

This sequence belongs to the class-III pyridoxal-phosphate-dependent aminotransferase family. HemL subfamily. In terms of assembly, homodimer. It depends on pyridoxal 5'-phosphate as a cofactor.

It is found in the cytoplasm. It carries out the reaction (S)-4-amino-5-oxopentanoate = 5-aminolevulinate. Its pathway is porphyrin-containing compound metabolism; protoporphyrin-IX biosynthesis; 5-aminolevulinate from L-glutamyl-tRNA(Glu): step 2/2. This Hamiltonella defensa subsp. Acyrthosiphon pisum (strain 5AT) protein is Glutamate-1-semialdehyde 2,1-aminomutase.